The chain runs to 340 residues: GATA transcription factor 20 (340 aa).

The disordered stretch occupies residues 1–88 (MSHHDGSKPY…MEEDEDAQHH (88 aa)). Positions 25–47 (ADDAAAHVAPTVDHLAAVAAEAE) are enriched in low complexity. Positions 48 to 60 (AMARFEEEHRALG) are enriched in basic and acidic residues. Over residues 61-84 (AEEEYEEEEDELEEEEEEMEEDED) the composition is skewed to acidic residues. A Tify domain is found at 121 to 156 (QPMASNQLTLSFQGEVYVFDSVSPDKVQAVLLLLGG). The CCT domain maps to 182–224 (RVASLMRFREKRKERNFDKKIRYSVRKEVALRMQRNRGQFTSS). The disordered stretch occupies residues 215 to 253 (QRNRGQFTSSKPKGDEATSELTASDGSPNWGSVEGRPPS). Residues 233–244 (SELTASDGSPNW) are compositionally biased toward polar residues. The GATA-type zinc-finger motif lies at 257-284 (CHHCGINAKATPMMRRGPDGPRTLCNAC). Residues 313-325 (DGNGSAAAPTTEQ) are compositionally biased toward polar residues. A disordered region spans residues 313–340 (DGNGSAAAPTTEQEIPAPATVNGHESST).

It belongs to the type IV zinc-finger family. Class C subfamily.

The protein localises to the nucleus. Its function is as follows. Transcriptional activator that specifically binds 5'-GATA-3' or 5'-GAT-3' motifs within gene promoters. This chain is GATA transcription factor 20, found in Oryza sativa subsp. japonica (Rice).